Reading from the N-terminus, the 846-residue chain is FNIP repeat-containing protein DDB_G0289381 (846 aa).

The segment covering 1–11 has biased composition (basic residues); the sequence is MKLLSFKKKPS. A disordered region spans residues 1–39; the sequence is MKLLSFKKKPSLTKSQSCPDKLKNLKEQQKDPKNGANYD. Basic and acidic residues predominate over residues 20–33; that stretch reads DKLKNLKEQQKDPK. FNIP repeat units lie at residues 159–193, 194–239, 240–283, and 284–325; these read IPNH…FGEK, FNQV…FGNN, FDQI…FQEN, and FNQP…YGGD. The tract at residues 362 to 384 is disordered; that stretch reads SSISLDISGGGSGSGSGVNSTTT. FNIP repeat units follow at residues 458–500, 501–546, and 654–693; these read FQQL…FGDG, FNQQ…FGKS, and FNQS…MFNK. A disordered region spans residues 702–734; sequence SNNNNENNNENNNENNNENNNENNNENNNNTNS. Positions 702-734 form a coiled coil; it reads SNNNNENNNENNNENNNENNNENNNENNNNTNS.

The chain is FNIP repeat-containing protein DDB_G0289381 from Dictyostelium discoideum (Social amoeba).